Reading from the N-terminus, the 291-residue chain is MDARAINSREKADLKYPRNTYIIGDVQGCYRELQELLELIQFDSTKDRLGFVGDLVNRGPNSLEVLRFLKSLSSPLIVLGNHDLYLLILGYGLMPEDSYEHTLHAVLQAPDKLELLEWLRHCPLIRYEKSLSAVLVHAGLPPQWNIKESILHAEEISTALKGPHYLAFLKNLFGNEPSQWKDDLEGQDRLRYICNAFTRMRFCDAKGHLDLESEGKTNQAPSRFRPWFEWRNPQEDNVDIVFGHWAALNGQSSAPHTHALDTGCAWGYKLTAINLKTKERFSVPCQSALRM.

This sequence belongs to the Ap4A hydrolase family.

It catalyses the reaction P(1),P(4)-bis(5'-adenosyl) tetraphosphate + H2O = 2 ADP + 2 H(+). In terms of biological role, hydrolyzes diadenosine 5',5'''-P1,P4-tetraphosphate to yield ADP. This is Bis(5'-nucleosyl)-tetraphosphatase, symmetrical from Coxiella burnetii (strain Dugway 5J108-111).